We begin with the raw amino-acid sequence, 613 residues long: Autophagy-related protein 22-2 (613 aa).

Positions 1–30 are disordered; sequence MAFNSTPPVSPGGEAQQRPPRFPGEDTTPT. The helical transmembrane segment at 41 to 61 threads the bilayer; that stretch reads YGIAAEVFAVCGVGSFLPLTL. A glycan (N-linked (GlcNAc...) asparagine) is linked at Asn90. Transmembrane regions (helical) follow at residues 120–140, 167–187, 189–209, 278–298, 307–327, 382–402, and 418–438; these read SFAM…LISF, LFIF…VVGV, CLGS…ANDP, VGLG…MLFA, ISGT…WFSF, VIIF…VSGT, and VGLL…LWPV. An N-linked (GlcNAc...) asparagine glycan is attached at Asn448. A run of 4 helical transmembrane segments spans residues 453–473, 477–497, 508–528, and 553–573; these read LCIA…IPLF, GVVG…HGLV, FFGL…YAAT, and GFFF…MVNA. The interval 592-613 is disordered; it reads REHASEYGGPSEEAEGLLARDI.

The protein belongs to the ATG22 family.

It localises to the vacuole membrane. Its function is as follows. Vacuolar effluxer which mediate the efflux of amino acids resulting from autophagic degradation. The release of autophagic amino acids allows the maintenance of protein synthesis and viability during nitrogen starvation. This is Autophagy-related protein 22-2 (atg22-2) from Aspergillus fumigatus (strain ATCC MYA-4609 / CBS 101355 / FGSC A1100 / Af293) (Neosartorya fumigata).